Consider the following 647-residue polypeptide: TNFAIP3-interacting protein 1 (647 aa).

The stretch at 39 to 72 (MQGIKMLGELLEESQMEASRLRQKAEELVKDSEL) forms a coiled coil. The segment covering 61–71 (QKAEELVKDSE) has biased composition (basic and acidic residues). The interval 61–168 (QKAEELVKDS…DLGPPPPEDS (108 aa)) is disordered. S77 carries the phosphoserine modification. The tract at residues 95-425 (TKVQVHPATS…SPLTRQREYQ (331 aa)) is interaction with Nef. Low complexity predominate over residues 102-115 (ATSTAATTTATATT). A compositionally biased stretch (polar residues) spans 143 to 155 (EEQNSPETGSHPT). Residues 209–270 (SKVHKNEQRT…KKLLMNSSCK (62 aa)) are a coiled coil. Residues S297, S416, and S455 each carry the phosphoserine modification. Positions 311–551 (AAEKKVKLLE…KASGERYHME (241 aa)) form a coiled coil. The required for inhibitory activity of TNF-induced NF-kappa-B activation stretch occupies residues 444–601 (ASPSSPPAAF…MEHPPPHPNS (158 aa)). The segment at 465–523 (KQELVTQNELLKQQVKIFEEDFQRERSDRERMNEEKEELKKQVEKLQAQVTLTNAQLKT) is ubiquitin-binding domain (UBD). The Nuclear localization signal signature appears at 537–543 (QKRKAKA). Y565 carries the phosphotyrosine modification. An Asymmetric dimethylarginine modification is found at R584. R612 is subject to Asymmetric dimethylarginine; alternate. R612 bears the Omega-N-methylarginine; alternate mark. Residues 613–647 (PPCAGIRNQSSQVMDPPPDRPAEPESADNDCDGPQ) form a disordered region. Positions 637–647 (ESADNDCDGPQ) are enriched in acidic residues. S638 bears the Phosphoserine mark.

As to quaternary structure, interacts with TNFAIP3 and IKBKG (polyubiquitinated); facilitates TNFAIP3-mediated de-ubiquitination of NEMO/IKBKG. Interacts with polyubiquitin. Interacts with MAPK1, SELPLG and PIK3CD. Interacts with IRAK1 (polyubiquitinated). Interacts with MYD88; the interaction is indicative for participation in an activated TLR-signaling complex. Interacts with TAX1BP1. In terms of processing, phosphorylation at Tyr-565 by SRC-family kinases recruits phosphoinositide-3-kinase (PI3K) PIK3CD:p85 heterodimer which results in integrin activation and leukocyte adhesion to activated endothelium during inflammation. In terms of tissue distribution, ubiquitous. Abundant in heart and skeletal muscle and expressed at lower levels in thymus, liver, kidney, brain and intestinal tract.

It is found in the cytoplasm. The protein localises to the nucleus. Functionally, inhibits NF-kappa-B activation and TNF-induced NF-kappa-B-dependent gene expression by regulating TAX1BP1 and A20/TNFAIP3-mediated deubiquitination of IKBKG; proposed to link A20/TNFAIP3 to ubiquitinated IKBKG. Involved in regulation of EGF-induced ERK1/ERK2 signaling pathway; blocks MAPK3/MAPK1 nuclear translocation and MAPK1-dependent transcription. Increases cell surface CD4(T4) antigen expression. Involved in the anti-inflammatory response of macrophages and positively regulates TLR-induced activation of CEBPB. Involved in the prevention of autoimmunity; this function implicates binding to polyubiquitin. Involved in leukocyte integrin activation during inflammation; this function is mediated by association with SELPLG and dependent on phosphorylation by SRC-family kinases. The chain is TNFAIP3-interacting protein 1 (Tnip1) from Mus musculus (Mouse).